The sequence spans 880 residues: Probable potassium channel AKT5 (880 aa).

Over 1–82 (MGIEKRKKMV…PFDPRYRAWD (82 aa)) the chain is Cytoplasmic. A helical membrane pass occupies residues 83-103 (WFLVILVLYTAWASPFEFGFL). Residues 104–111 (QTPRAPLS) lie on the Extracellular side of the membrane. Residues 112–132 (ILDNVVNGFFAVDIVLTFFVA) traverse the membrane as a helical segment. Over 133–153 (FLDKATYLLVDDPKRIAWRYT) the chain is Cytoplasmic. A helical transmembrane segment spans residues 154-174 (STWLIFDVVSTVPYELFGSLL). At 175–182 (HNTIQGYG) the chain is on the extracellular side. The chain crosses the membrane as a helical; Voltage-sensor span at residues 183–203 (IFSMLRLWRLHRVSKCFARLE). The Cytoplasmic segment spans residues 204-217 (KDRKYNYFWIRCTK). Residues 218 to 238 (LLLVSLFVVHCGACFCYSIAA) traverse the membrane as a helical segment. Residues 239–265 (HYPDPSMTFMALAEANWKQKSLLIRYV) lie on the Extracellular side of the membrane. Positions 266-285 (TAMYWSITTFSTTGYGDIHG) form an intramembrane region, pore-forming. Topologically, residues 286–291 (NNAEER) are extracellular. A helical membrane pass occupies residues 292–312 (AFILFYMIFNLGLLAYIIGNM). The Cytoplasmic portion of the chain corresponds to 313–880 (TNLVVHVTSR…GDFLLLLKVS (568 aa)). A nucleoside 3',5'-cyclic phosphate is bound at residue 396–517 (LFHGISNDLL…IMNNLLQHLK (122 aa)). ANK repeat units lie at residues 541–570 (DLPL…NPNE), 574–603 (NGRT…DPNI), 607–636 (EGSV…TLSF), 637–667 (DTVG…DISL), and 671–700 (NGTT…DMDK). One can recognise a KHA domain in the interval 809–880 (VGGVYPARVT…GDFLLLLKVS (72 aa)).

This sequence belongs to the potassium channel family. Plant (TC 1.A.1.4) subfamily. The potassium channel is probably composed of a homo- or heterotetrameric complex of pore-forming subunits. As to expression, predominantly expressed in flowers.

It is found in the membrane. Probable potassium channel. May interact with the cytoskeleton or with regulatory proteins. This is Probable potassium channel AKT5 (AKT5) from Arabidopsis thaliana (Mouse-ear cress).